The primary structure comprises 90 residues: Probable Fe(2+)-trafficking protein (90 aa).

It belongs to the Fe(2+)-trafficking protein family.

Its function is as follows. Could be a mediator in iron transactions between iron acquisition and iron-requiring processes, such as synthesis and/or repair of Fe-S clusters in biosynthetic enzymes. The sequence is that of Probable Fe(2+)-trafficking protein from Chromohalobacter salexigens (strain ATCC BAA-138 / DSM 3043 / CIP 106854 / NCIMB 13768 / 1H11).